Consider the following 264-residue polypeptide: MNKDVLQGQSIIRYEEGQLIQTTDSYVTEFPLTINVNGTEFATVICSPTHMEELVVGFLASEGAIYKKEEIKSLQIDDSKGFAHVELTKDLGDRFEYSTKRMIASCCGKSREFYFHNDAAIAKTSMSKITLTPKQVLNMMTGLQTASTLFKQTGGLHNAAISDGDEFFEHRQDIGRHNALDKLYGFCLERRIPVRNKVLIFSGRISSEILLKAAKIGVGVILSKSAPTTLAITLANDLNITAIGFIRDGSFNIYSHPERIKATE.

Cys107 serves as the catalytic Cysteine persulfide intermediate.

It belongs to the FdhD family.

The protein localises to the cytoplasm. Required for formate dehydrogenase (FDH) activity. Acts as a sulfur carrier protein that transfers sulfur from IscS to the molybdenum cofactor prior to its insertion into FDH. The chain is Sulfur carrier protein FdhD from Staphylococcus haemolyticus (strain JCSC1435).